The chain runs to 124 residues: Small ribosomal subunit protein uS12 (124 aa).

The residue at position 89 (D89) is a 3-methylthioaspartic acid. The tract at residues 103–124 (DTAGVQNRNRGRSKYGAKRPKK) is disordered. Over residues 111 to 124 (NRGRSKYGAKRPKK) the composition is skewed to basic residues.

Belongs to the universal ribosomal protein uS12 family. In terms of assembly, part of the 30S ribosomal subunit. Contacts proteins S8 and S17. May interact with IF1 in the 30S initiation complex.

With S4 and S5 plays an important role in translational accuracy. In terms of biological role, interacts with and stabilizes bases of the 16S rRNA that are involved in tRNA selection in the A site and with the mRNA backbone. Located at the interface of the 30S and 50S subunits, it traverses the body of the 30S subunit contacting proteins on the other side and probably holding the rRNA structure together. The combined cluster of proteins S8, S12 and S17 appears to hold together the shoulder and platform of the 30S subunit. In Desulforudis audaxviator (strain MP104C), this protein is Small ribosomal subunit protein uS12.